A 470-amino-acid polypeptide reads, in one-letter code: Argininosuccinate lyase (470 aa).

The protein belongs to the lyase 1 family. Argininosuccinate lyase subfamily.

Its subcellular location is the cytoplasm. It catalyses the reaction 2-(N(omega)-L-arginino)succinate = fumarate + L-arginine. It functions in the pathway amino-acid biosynthesis; L-arginine biosynthesis; L-arginine from L-ornithine and carbamoyl phosphate: step 3/3. This is Argininosuccinate lyase from Mycobacterium tuberculosis (strain CDC 1551 / Oshkosh).